The following is a 1337-amino-acid chain: Receptor-type tyrosine-protein phosphatase eta (1337 aa).

An N-terminal signal peptide occupies residues 1 to 35 (MKPAAREARLPPRSPGLRWALPLLLLLLRLGQILC). The Extracellular segment spans residues 36-975 (AGGTPSPIPD…LPQDPGVICG (940 aa)). Polar residues-rich tracts occupy residues 67 to 82 (SFHKQNGTGTPQVETN) and 89 to 119 (SSGANDSLRTPEQGSNGTDGASQKTPSSTGP). Residues 67–124 (SFHKQNGTGTPQVETNTSEDGESSGANDSLRTPEQGSNGTDGASQKTPSSTGPSPVFD) are disordered. Residues asparagine 72, asparagine 82, asparagine 93, asparagine 104, asparagine 142, asparagine 172, asparagine 192, asparagine 231, asparagine 258, asparagine 278, asparagine 342, asparagine 351, asparagine 376, asparagine 391, asparagine 396, asparagine 413, asparagine 431, asparagine 501, asparagine 525, asparagine 536, asparagine 582, asparagine 603, asparagine 618, asparagine 628, asparagine 637, asparagine 666, asparagine 669, asparagine 761, asparagine 772, asparagine 784, asparagine 790, asparagine 824, asparagine 910, and asparagine 937 are each glycosylated (N-linked (GlcNAc...) asparagine). Fibronectin type-III domains follow at residues 121-209 (PVFD…EPIP), 207-291 (PIPV…EGGL), 271-364 (NPYL…EFRT), 368-456 (QVFD…PPVP), 457-541 (VSDF…TVPS), 542-623 (AVFD…TAQY), 625-720 (RPSN…TDPA), 721-817 (SMAS…TDPP), and 816-902 (PPPP…SEVL). Residues 278–327 (NKTKGDPLGTEGGLDASNTERSRAGSPTAPVHDESLVGPVDPSSGQQSRD) form a disordered region. A helical membrane pass occupies residues 976–996 (AVFGCIFGALVIVTVGGFIFW). At 997–1337 (RKKRKDAKNN…TFGKTNGYIA (341 aa)) the chain is on the cytoplasmic side. Serine 1009 carries the post-translational modification Phosphoserine. In terms of domain architecture, Tyrosine-protein phosphatase spans 1041 to 1298 (FAEEYEDLKL…VFLNQCVLDI (258 aa)). Substrate-binding positions include aspartate 1205, 1239–1245 (CSAGVGR), and glutamine 1283. Cysteine 1239 serves as the catalytic Phosphocysteine intermediate.

The protein belongs to the protein-tyrosine phosphatase family. Receptor class 3 subfamily. As to quaternary structure, monomer. Interacts with CTNNB1 (phosphorylated) and JUP (phosphorylated). Interacts with FLT3 (phosphorylated). Interacts with GAB1 and GRB2. In terms of processing, N- and O-glycosylated. Post-translationally, N-glycosylated. In terms of tissue distribution, expressed in the promyelocytic cell line HL-60, the granulocyte-macrophage colony-stimulating factor-dependent leukemic cell line F-36P, and the IL3 and erythropoietin-dependent leukemic cell line F-36E. Expressed predominantly in epithelial cells and lymphocytes. Enhanced expression at high cell density. Expressed in the brain.

Its subcellular location is the cell membrane. The protein resides in the cell projection. It is found in the ruffle membrane. The protein localises to the cell junction. It localises to the secreted. Its subcellular location is the extracellular space. It carries out the reaction O-phospho-L-tyrosyl-[protein] + H2O = L-tyrosyl-[protein] + phosphate. In terms of biological role, tyrosine phosphatase which dephosphorylates or contributes to the dephosphorylation of CTNND1, FLT3, PDGFRB, MET, KDR, LYN, SRC, MAPK1, MAPK3, EGFR, TJP1, OCLN, PIK3R1 and PIK3R2. Plays a role in cell adhesion, migration, proliferation and differentiation. Has a role in megakaryocytes and platelet formation. Involved in vascular development. Regulator of macrophage adhesion and spreading. Positively affects cell-matrix adhesion. Positive regulator of platelet activation and thrombosis. Negative regulator of cell proliferation. Negative regulator of PDGF-stimulated cell migration; through dephosphorylation of PDGFR. Positive regulator of endothelial cell survival, as well as of VEGF-induced SRC and AKT activation; through KDR dephosphorylation. Negative regulator of EGFR signaling pathway; through EGFR dephosphorylation. Enhances the barrier function of epithelial junctions during reassembly. Negatively regulates T-cell receptor (TCR) signaling. Upon T-cell TCR activation, it is up-regulated and excluded from the immunological synapses, while upon T-cell-antigen presenting cells (APC) disengagement, it is no longer excluded and can dephosphorylate PLCG1 and LAT to down-regulate prolongation of signaling. Functionally, activates angiogenesis and cell migration. Downregulates the expression of the endothelial adhesion molecules ICAM1 and VCAM1. In Homo sapiens (Human), this protein is Receptor-type tyrosine-protein phosphatase eta (PTPRJ).